The chain runs to 176 residues: Probable DNA-directed RNA polymerase subunit delta (176 aa).

Residues 14–81 (CSMIEVVHSV…GENRWGLRSW (68 aa)) form the HTH HARE-type domain. The tract at residues 91-176 (ILPQPKPKKK…ETEEEEEEEL (86 aa)) is disordered. A compositionally biased stretch (acidic residues) spans 106–176 (DGFDDYIEED…ETEEEEEEEL (71 aa)).

It belongs to the RpoE family. In terms of assembly, RNAP is composed of a core of 2 alpha, a beta and a beta' subunits. The core is associated with a delta subunit and one of several sigma factors.

Functionally, participates in both the initiation and recycling phases of transcription. In the presence of the delta subunit, RNAP displays an increased specificity of transcription, a decreased affinity for nucleic acids, and an increased efficiency of RNA synthesis because of enhanced recycling. This chain is Probable DNA-directed RNA polymerase subunit delta, found in Bacillus thuringiensis (strain Al Hakam).